Here is a 311-residue protein sequence, read N- to C-terminus: Ribonuclease HIII (311 aa).

Residues 95–311 form the RNase H type-2 domain; the sequence is MSIVGSDEVG…NTEKAFRLLK (217 aa). The a divalent metal cation site is built by D101, E102, and D206.

The protein belongs to the RNase HII family. RnhC subfamily. Mn(2+) serves as cofactor. Mg(2+) is required as a cofactor.

It localises to the cytoplasm. The enzyme catalyses Endonucleolytic cleavage to 5'-phosphomonoester.. In terms of biological role, endonuclease that specifically degrades the RNA of RNA-DNA hybrids. The polypeptide is Ribonuclease HIII (Bacillus cereus (strain AH187)).